The following is a 1211-amino-acid chain: Periplasmic acid trehalase ATC1 (1211 aa).

Residues 1–46 (MKRIRSLWFNAEASYSNLNNSPSLRNKNSTGNNSRSKNYRSFSRFD) are Cytoplasmic-facing. The helical transmembrane segment at 47–67 (LINSILLLMMLFLLAIFVTAL) threads the bilayer. At 68–1211 (YLTKSSRLTY…ATIKEIVLND (1144 aa)) the chain is on the periplasmic side. The required for cell surface targeting stretch occupies residues 70 to 131 (TKSSRLTYSH…NTAYYDDENM (62 aa)). 10 N-linked (GlcNAc...) asparagine glycosylation sites follow: asparagine 98, asparagine 207, asparagine 238, asparagine 247, asparagine 255, asparagine 259, asparagine 325, asparagine 370, asparagine 376, and asparagine 488. 513–514 (WD) is a substrate binding site. 4 N-linked (GlcNAc...) asparagine glycosylation sites follow: asparagine 539, asparagine 568, asparagine 628, and asparagine 638. Glutamate 644 (proton donor) is an active-site residue. N-linked (GlcNAc...) asparagine glycans are attached at residues asparagine 696 and asparagine 705. 711-712 (KQ) lines the substrate pocket. N-linked (GlcNAc...) asparagine glycans are attached at residues asparagine 879, asparagine 897, asparagine 910, asparagine 972, asparagine 990, asparagine 1031, asparagine 1049, asparagine 1064, asparagine 1147, and asparagine 1157.

The protein belongs to the glycosyl hydrolase 65 family. Glycosylated.

The protein localises to the membrane. Its subcellular location is the vacuole lumen. The protein resides in the periplasm. It catalyses the reaction alpha,alpha-trehalose + H2O = alpha-D-glucose + beta-D-glucose. Functionally, periplasmic acid trehalase that catalyzes hydrolysis of the disaccharide trehalose and required for growth on trehalose as carbon source. Growth on trehalose is strictly respiratory. This Saccharomyces cerevisiae (strain CEN.PK113-7D) (Baker's yeast) protein is Periplasmic acid trehalase ATC1.